A 332-amino-acid chain; its full sequence is tRNA U34 carboxymethyltransferase (332 aa).

Residues Lys-91, Trp-105, Lys-110, Gly-130, 152-154, 181-182, Met-196, Tyr-200, and Arg-315 each bind carboxy-S-adenosyl-L-methionine; these read DPS and IE.

It belongs to the class I-like SAM-binding methyltransferase superfamily. CmoB family. Homotetramer.

It catalyses the reaction carboxy-S-adenosyl-L-methionine + 5-hydroxyuridine(34) in tRNA = 5-carboxymethoxyuridine(34) in tRNA + S-adenosyl-L-homocysteine + H(+). In terms of biological role, catalyzes carboxymethyl transfer from carboxy-S-adenosyl-L-methionine (Cx-SAM) to 5-hydroxyuridine (ho5U) to form 5-carboxymethoxyuridine (cmo5U) at position 34 in tRNAs. The protein is tRNA U34 carboxymethyltransferase of Shewanella putrefaciens (strain CN-32 / ATCC BAA-453).